The sequence spans 35 residues: Entry-fusion complex protein OPG076 (35 aa).

The chain crosses the membrane as a helical span at residues 2 to 22 (LVVIMFFIAFVFCSWLSYSYL). Topologically, residues 23 to 35 (CPYISTKELNKSR) are virion surface.

The protein belongs to the orthopoxvirus OPG076 family. As to quaternary structure, component of the entry fusion complex (EFC) composed of OPG053, OPG076, OPG086, OPG094, OPG095, OPG099, OPG107, OPG143, OPG104, OPG147 and OPG155. Except for OPG095 and OPG053, each of the EFC proteins is required for assembly or stability of the complex. Post-translationally, unglycosylated because produced in viral factories instead of the classic ER -Golgi route.

It is found in the virion membrane. Its function is as follows. Component of the entry fusion complex (EFC), which consists of 11 proteins. During cell infection, this complex mediates entry of the virion core into the host cytoplasm by a two-step mechanism consisting of lipid mixing of the viral and cellular membranes and subsequent pore formation. This chain is Entry-fusion complex protein OPG076 (OPG076), found in Cynomys gunnisoni (Gunnison's prairie dog).